The chain runs to 144 residues: Fluoride-specific ion channel FluC (144 aa).

Transmembrane regions (helical) follow at residues 7–27 (LIVM…SVAA), 33–53 (FIPW…IGFF), 71–91 (LFVM…SLQT), and 105–125 (VNVA…HITA). Residues glycine 79 and threonine 82 each contribute to the Na(+) site.

It belongs to the fluoride channel Fluc/FEX (TC 1.A.43) family.

The protein resides in the cell inner membrane. It catalyses the reaction fluoride(in) = fluoride(out). Na(+) is not transported, but it plays an essential structural role and its presence is essential for fluoride channel function. Fluoride-specific ion channel. Important for reducing fluoride concentration in the cell, thus reducing its toxicity. The chain is Fluoride-specific ion channel FluC from Gluconobacter oxydans (strain 621H) (Gluconobacter suboxydans).